A 225-amino-acid polypeptide reads, in one-letter code: MGQKVNPNGFRYGVTKKHNTLWYADKKDFADILLQDDKIYRFFNKFTREYLIGKVEIRRNQNGHLSVLVHSAKPGAILGQNGENINKLTQDIQKLLRNKELKLNIEVVNIKNPDLNAIILAEQIAIKLENRAPFRVAQKFAIRNAMKSGAKGIKTQVSGRLNGVDMARSEGYSEGEMKLHTLRQDVDFAMATARTTYGAIGVKVWVSKGEFLDGNGEKNVTTEKN.

Positions 39–109 (IYRFFNKFTR…ELKLNIEVVN (71 aa)) constitute a KH type-2 domain.

It belongs to the universal ribosomal protein uS3 family. As to quaternary structure, part of the 30S ribosomal subunit. Forms a tight complex with proteins S10 and S14.

Binds the lower part of the 30S subunit head. Binds mRNA in the 70S ribosome, positioning it for translation. The sequence is that of Small ribosomal subunit protein uS3 from Mycoplasma mobile (strain ATCC 43663 / 163K / NCTC 11711) (Mesomycoplasma mobile).